We begin with the raw amino-acid sequence, 179 residues long: Large ribosomal subunit protein uL5 (179 aa).

The protein belongs to the universal ribosomal protein uL5 family. Part of the 50S ribosomal subunit; part of the 5S rRNA/L5/L18/L25 subcomplex. Contacts the 5S rRNA and the P site tRNA. Forms a bridge to the 30S subunit in the 70S ribosome.

In terms of biological role, this is one of the proteins that bind and probably mediate the attachment of the 5S RNA into the large ribosomal subunit, where it forms part of the central protuberance. In the 70S ribosome it contacts protein S13 of the 30S subunit (bridge B1b), connecting the 2 subunits; this bridge is implicated in subunit movement. Contacts the P site tRNA; the 5S rRNA and some of its associated proteins might help stabilize positioning of ribosome-bound tRNAs. The polypeptide is Large ribosomal subunit protein uL5 (Pelobacter propionicus (strain DSM 2379 / NBRC 103807 / OttBd1)).